A 263-amino-acid chain; its full sequence is uncharacterized protein (263 aa).

7 consecutive transmembrane segments (helical) span residues 53 to 73 (FWII…LVKI), 103 to 123 (GFLF…LPGL), 130 to 150 (IILP…VFSY), 153 to 173 (LIPA…EPLW), 181 to 201 (FILV…IQIL), 213 to 233 (MLAA…ILTP), and 241 to 261 (LLLS…LFLI).

Belongs to the TatC family.

The protein resides in the plastid. The protein localises to the chloroplast membrane. This is an uncharacterized protein from Trieres chinensis (Marine centric diatom).